A 116-amino-acid chain; its full sequence is Vesicle-associated membrane protein 2 (116 aa).

The tract at residues 1–28 (MSATAATVPPAAPAGEGGPPAPPPNLTS) is disordered. Ser-2 carries the N-acetylserine modification. Topologically, residues 2-94 (SATAATVPPA…KRKYWWKNLK (93 aa)) are cytoplasmic. The region spanning 31–91 (RLQQTQAQVD…AKLKRKYWWK (61 aa)) is the v-SNARE coiled-coil homology domain. Residues 92–116 (NLKMMIILGVICAIILIIIIVYFST) are required for interaction with SEPT8. Residues 95-114 (MMIILGVICAIILIIIIVYF) traverse the membrane as a helical; Anchor for type IV membrane protein segment. The Vesicular portion of the chain corresponds to 115 to 116 (ST).

Belongs to the synaptobrevin family. In terms of assembly, part of the SNARE core complex containing SNAP25, VAMP2 and STX1A; this complex constitutes the basic catalytic machinery of the complex neurotransmitter release apparatus. Recruited to the SNARE complex following binding of the SNARE complex component STX1A to STXBP1. This complex binds to CPLX1. Interacts with VAPA and VAPB. Interacts (via N-terminus) with KCNB1 (via N-terminus and C-terminus); stimulates the channel inactivation rate of KCNB1. Interacts with POPDC1 and STX4. Interacts with WDFY2, PRKCZ and PRKCI. Forms a complex with WDFY2 and PRKCZ. Interacts with SEPT8; the interaction inhibits interaction of VAMP2 with SYP. Interacts with SYP; the interaction is inhibited by interaction with SEPT8. Interacts with PICALM. Interacts with alpha-synuclein/SNCA. Interacts with STX3 isoform 3B. Phosphorylated by PRKCZ in vitro and this phosphorylation is increased in the presence of WDFY2. In terms of processing, (Microbial infection) Targeted and hydrolyzed by C.botulinum neurotoxin type B (BoNT/B, botB); 20 hours after treatment of spinal cord cells almost all the protein has been digested. BoNT/B hydrolyzes the 76-Gln-|-Phe-77 bond and inhibits neurotransmitter release. Post-translationally, (Microbial infection) Targeted and hydrolyzed by C.tetani toxin (tetX); 20 hours after treatment of spinal cord cells almost all the protein has been digested. Tetanus toxin hydrolyzes the 76-Gln-|-Phe-77 bond and inhibits neurotransmitter release. As to expression, expressed in the outer plexiform layer of the retina (at protein level).

It is found in the cytoplasmic vesicle. The protein localises to the secretory vesicle. Its subcellular location is the synaptic vesicle membrane. The protein resides in the cell membrane. Its function is as follows. Involved in the targeting and/or fusion of transport vesicles to their target membrane. Major SNARE protein of synaptic vesicles which mediates fusion of synaptic vesicles to release neurotransmitters. Essential for fast vesicular exocytosis and activity-dependent neurotransmitter release as well as fast endocytosis that mediates rapid reuse of synaptic vesicles. Modulates the gating characteristics of the delayed rectifier voltage-dependent potassium channel KCNB1. The polypeptide is Vesicle-associated membrane protein 2 (Vamp2) (Mus musculus (Mouse)).